We begin with the raw amino-acid sequence, 393 residues long: Putative B3 domain-containing protein Os06g0632500 (393 aa).

DNA-binding regions (TF-B3) lie at residues 27-123, 141-238, and 316-393; these read LSVP…FDPG, RPRF…FLQN, and NSFT…VQRR.

The protein resides in the nucleus. The sequence is that of Putative B3 domain-containing protein Os06g0632500 from Oryza sativa subsp. japonica (Rice).